The chain runs to 44 residues: M-factor (44 aa).

Positions 1 to 32 (MDSIATNTHSSSIVNAYNNNPTDVVKTQNIKN) are excised as a propeptide. Position 41 is a cysteine methyl ester (C41). A lipid anchor (S-farnesyl cysteine) is attached at C41. A propeptide spans 42–44 (VIA) (removed in mature form).

The protein localises to the secreted. M-factor is a mating pheromone produced by M-type mating cells. All three mfm genes contribute to the production of M-factor. This is M-factor (mfm2) from Schizosaccharomyces pombe (strain 972 / ATCC 24843) (Fission yeast).